The primary structure comprises 271 residues: 4-hydroxy-tetrahydrodipicolinate reductase (271 aa).

NAD(+) contacts are provided by residues 11-16 (GGSGRM) and Glu37. Arg38 serves as a coordination point for NADP(+). NAD(+) contacts are provided by residues 101 to 103 (GTT) and 125 to 128 (APNM). Residue His158 is the Proton donor/acceptor of the active site. Residue His159 coordinates (S)-2,3,4,5-tetrahydrodipicolinate. The active-site Proton donor is Lys162. 168 to 169 (GT) contributes to the (S)-2,3,4,5-tetrahydrodipicolinate binding site.

The protein belongs to the DapB family.

Its subcellular location is the cytoplasm. It catalyses the reaction (S)-2,3,4,5-tetrahydrodipicolinate + NAD(+) + H2O = (2S,4S)-4-hydroxy-2,3,4,5-tetrahydrodipicolinate + NADH + H(+). The enzyme catalyses (S)-2,3,4,5-tetrahydrodipicolinate + NADP(+) + H2O = (2S,4S)-4-hydroxy-2,3,4,5-tetrahydrodipicolinate + NADPH + H(+). The protein operates within amino-acid biosynthesis; L-lysine biosynthesis via DAP pathway; (S)-tetrahydrodipicolinate from L-aspartate: step 4/4. Functionally, catalyzes the conversion of 4-hydroxy-tetrahydrodipicolinate (HTPA) to tetrahydrodipicolinate. The protein is 4-hydroxy-tetrahydrodipicolinate reductase of Shewanella piezotolerans (strain WP3 / JCM 13877).